The sequence spans 497 residues: Xylooligosaccharide oxidase (497 aa).

A signal peptide spans 1-16 (MHLLPLTVSATAVVSA). Residues C30 and C79 are joined by a disulfide bond. N-linked (GlcNAc...) asparagine glycans are attached at residues N42 and N117. The FAD-binding PCMH-type domain maps to 57–230 (LPYTPAAIAK…ASFRFKTFAA (174 aa)). Residues 94-155 (HSYASFGLGG…GKRAFSHGTC (62 aa)) constitute a cross-link (6-(S-cysteinyl)-8alpha-(pros-histidyl)-FAD (His-Cys)). A substrate-binding site is contributed by T154. 3 N-linked (GlcNAc...) asparagine glycosylation sites follow: N192, N233, and N245. R272 contacts substrate. Residues N289 and N307 are each glycosylated (N-linked (GlcNAc...) asparagine). Positions 412 and 451 each coordinate substrate.

Belongs to the oxygen-dependent FAD-linked oxidoreductase family. It depends on FAD as a cofactor. Post-translationally, the FAD cofactor is bound via a bicovalent 6-S-cysteinyl, 8alpha-N1-histidyl FAD linkage.

It is found in the secreted. The catalysed reaction is D-xylobiose + O2 = D-xylobiono-1,5-lactone + H2O2. It catalyses the reaction D-xylotriose + O2 = D-xylotriono-1,5-lactone + H2O2. The enzyme catalyses D-xylotetraose + O2 = D-xylotetraono-1,5-lactone + H2O2. Its function is as follows. Catalyzes the selective oxidation of C1 hydroxyl moieties on mono-, oligo- and polysaccharides with concomitant reduction of molecular oxygen to hydrogen peroxide. This results in the formation of the corresponding lactones, which typically undergo spontaneous hydrolysis. Xylooligosaccharide oxidase is able to oxidize a variety of substrates including D-xylose, D-cellobiose, lactose and arabinose. The enzyme acts primarily on xylooligosaccharides, indicating that it prefers pentose-based oligosaccharides over hexose-based oligosaccharides. This is Xylooligosaccharide oxidase from Thermothelomyces thermophilus (strain ATCC 42464 / BCRC 31852 / DSM 1799) (Sporotrichum thermophile).